Consider the following 607-residue polypeptide: Matrix metalloproteinase-16 (607 aa).

The signal sequence occupies residues 1–31; it reads MILLAFSSGRRLDFVHRSGVFFFQTLLWILC. The propeptide occupies 32-119; it reads ATVCGTEQYF…SSKFNIRRKR (88 aa). An N-linked (GlcNAc...) asparagine glycan is attached at asparagine 83. Positions 99–106 match the Cysteine switch motif; that stretch reads PRCGVPDQ. Cysteine 101 is a Zn(2+) binding site. Topologically, residues 120-564 are extracellular; it reads YALTGQKWQH…LDNTASTVKA (445 aa). A Ca(2+)-binding site is contributed by aspartate 183. Zn(2+)-binding residues include histidine 193 and aspartate 195. Residues aspartate 200, glycine 201, glycine 203, and phenylalanine 205 each coordinate Ca(2+). Histidine 208 serves as a coordination point for Zn(2+). 3 residues coordinate Ca(2+): glycine 215, glycine 217, and aspartate 219. Histidine 221 is a binding site for Zn(2+). Positions 223 and 226 each coordinate Ca(2+). Histidine 246 is a binding site for Zn(2+). The active site involves glutamate 247. Zn(2+) is bound by residues histidine 250 and histidine 256. A disordered region spans residues 281–340; it reads DDLQGIQKIYGPPDKIPPPTRPLPTVPPHRSVPPADPRKNDRPKPPRPPTGRPSYPGAKP. Positions 294 to 315 are enriched in pro residues; the sequence is DKIPPPTRPLPTVPPHRSVPPA. Hemopexin repeat units lie at residues 340–388, 389–434, 436–484, and 485–532; these read PNIC…WRGL, PPSI…GNGI, PHGI…KGIP, and ESPQ…FMGC. A disulfide bridge connects residues cysteine 343 and cysteine 532. The chain crosses the membrane as a helical span at residues 565-585; the sequence is IAIVIPCILALCLLVLVYTVF. Residues 586–607 lie on the Cytoplasmic side of the membrane; the sequence is QFKRKGTPRHILYCKRSMQEWV.

This sequence belongs to the peptidase M10A family. As to quaternary structure, interacts with CSPG4 through CSPG4 chondroitin sulfate glycosaminoglycan. Requires Zn(2+) as cofactor. The cofactor is Ca(2+). Post-translationally, the precursor is cleaved by a furin endopeptidase. Strongly expressed in the lung, brain and smooth muscle cells. Weakly detectable in the spleen and liver and indetectable in the heart, skeletal muscle and kidney.

It localises to the cell membrane. The protein localises to the secreted. Its subcellular location is the extracellular space. The protein resides in the extracellular matrix. In terms of biological role, endopeptidase that degrades various components of the extracellular matrix, such as collagen type III and fibronectin. Activates progelatinase A. Involved in the matrix remodeling of blood vessels. The short isoform efficiently converts progelatinase A to the intermediate form but not to the mature one. It has no effect on type I, II, IV and V collagen. However, upon interaction with CSPG4, it may be involved in degradation and invasion of type I collagen by melanoma cells. The polypeptide is Matrix metalloproteinase-16 (Mmp16) (Rattus norvegicus (Rat)).